Consider the following 204-residue polypeptide: Large ribosomal subunit protein eL15 (204 aa).

Belongs to the eukaryotic ribosomal protein eL15 family. As to quaternary structure, component of the large ribosomal subunit.

The protein localises to the cytoplasm. Its function is as follows. Component of the large ribosomal subunit. The ribosome is a large ribonucleoprotein complex responsible for the synthesis of proteins in the cell. This chain is Large ribosomal subunit protein eL15 (rpl15), found in Monopterus albus (Swamp eel).